The following is a 1344-amino-acid chain: Regulatory-associated protein of TOR 1 (1344 aa).

The span at 28-44 shows a compositional bias: basic and acidic residues; that stretch reads CVSSHDDGDSRRKDSEA. Disordered regions lie at residues 28 to 56 and 771 to 818; these read CVSS…GTTE and ASTD…DSVS. The segment covering 785–816 has biased composition (low complexity); the sequence is SSSPLGSSGLMQGSPLSDDSSLHSDSGMMHDS. WD repeat units follow at residues 1025–1064, 1070–1111, 1125–1164, 1168–1208, 1214–1255, 1259–1298, and 1307–1344; these read RFET…LLNG, FPDK…GKQK, GARD…LVRS, ESEC…PLVC, QKVE…DTYL, AHRG…LGII, and QKIG…SQAR.

It belongs to the WD repeat RAPTOR family. As to quaternary structure, interacts with TOR, ATPK1 and ML1. Interacts with KIN10. Post-translationally, phosphorylated by KIN10. In terms of tissue distribution, expressed in roots, leaves, flowers and seeds.

It is found in the cytoplasm. Probable component of the plant TOR kinase pathway that recruits substrates for TOR. Modulates plant cell growth and regulates the activity of ATPK1 kinase in response to osmotic stress. In Arabidopsis thaliana (Mouse-ear cress), this protein is Regulatory-associated protein of TOR 1 (RAPTOR1).